We begin with the raw amino-acid sequence, 320 residues long: o-succinylbenzoate synthase (320 aa).

Lys-133 (proton donor) is an active-site residue. Asp-161, Glu-190, and Asp-213 together coordinate Mg(2+). Lys-235 functions as the Proton acceptor in the catalytic mechanism.

This sequence belongs to the mandelate racemase/muconate lactonizing enzyme family. MenC type 1 subfamily. A divalent metal cation is required as a cofactor.

It catalyses the reaction (1R,6R)-6-hydroxy-2-succinyl-cyclohexa-2,4-diene-1-carboxylate = 2-succinylbenzoate + H2O. Its pathway is quinol/quinone metabolism; 1,4-dihydroxy-2-naphthoate biosynthesis; 1,4-dihydroxy-2-naphthoate from chorismate: step 4/7. It functions in the pathway quinol/quinone metabolism; menaquinone biosynthesis. Functionally, converts 2-succinyl-6-hydroxy-2,4-cyclohexadiene-1-carboxylate (SHCHC) to 2-succinylbenzoate (OSB). The protein is o-succinylbenzoate synthase of Escherichia coli O81 (strain ED1a).